The sequence spans 311 residues: JNK1/MAPK8-associated membrane protein (311 aa).

Topologically, residues Met1–Asp57 are lumenal. Asn22 carries N-linked (GlcNAc...) asparagine glycosylation. The chain crosses the membrane as a helical span at residues Trp58 to Trp78. Over Tyr79–Ala87 the chain is Cytoplasmic. Residues Leu88–Val108 traverse the membrane as a helical segment. Topologically, residues Ser109–Ala149 are lumenal. Residues Val150–Leu170 form a helical membrane-spanning segment. Over Leu171–Arg188 the chain is Cytoplasmic. A helical transmembrane segment spans residues Phe189–Gly209. Position 210 (Gly210) is a topological domain, lumenal. The helical transmembrane segment at Gly211–Val231 threads the bilayer. Residues Tyr232–Arg250 lie on the Cytoplasmic side of the membrane. The helical transmembrane segment at Leu251–Val271 threads the bilayer. Residues Asp272–Asp277 lie on the Lumenal side of the membrane. The chain crosses the membrane as a helical span at residues Leu278–Thr298. Over Glu299–His311 the chain is Cytoplasmic.

Interacts with RNF5 and MAPK8, but not with MAPK9. Binding to MAPK8 occurs before and after exposure to stress, such as UV irradiation. After exposure to stress, interacts with phosphorylated MAPK8. Competes with DUSP10 for MAPK8 binding. Associates with multiple components of the proteasome and with ERAD regulatory proteins, including AMFR/GP78, CANX, PSMC1, PSMC2, PSMC3/TBP1, PSMC5, PSMC6, PSMD8, SEC61-ALPHA and UFD1. In terms of processing, ubiquitinated by RNF5 via 'Lys-63'-linked ubiquitin linkage in a UBE2N-dependent manner. Ubiquitination decreases association with components of the proteasome and ERAD. As to expression, expressed in numerous tissues, including brain, spleen, thymus, liver, kidney and testis.

The protein resides in the endoplasmic reticulum membrane. Functionally, regulates the duration of MAPK8 activity in response to various stress stimuli. Facilitates degradation of misfolded endoplasmic reticulum (ER) proteins through the recruitment of components of the proteasome and endoplasmic reticulum-associated degradation (ERAD) system. This is JNK1/MAPK8-associated membrane protein (Jkamp) from Mus musculus (Mouse).